We begin with the raw amino-acid sequence, 283 residues long: MRRIGAHVSIAGGIENAPMRAREIGATAFAMFTKNQRQWNAPPLTTQSIDAFKNNCAECGYHARHILPHDSYLINLGSPDPAKLERSRKAFTDEMQRVEALGLSLLNFHPGSHLNETGIDNCLNTIAESVNIALDNSSGVTAVLENTAGQGSNLGHTFEQLAAIIDQIEDKTRVGVCLDTCHLFAAGYDLRTSEAVEATFNEFDSIVSLSYLRGMHLNDAKLDLGSKRDRHESIGSGFIGNDGFAAIIQHPACDEIPLILETPNPDIWNREIEMLYQMEGDKR.

Positions 69, 109, 145, 179, 182, 216, 229, 231, and 261 each coordinate Zn(2+).

Belongs to the AP endonuclease 2 family. Zn(2+) is required as a cofactor.

The enzyme catalyses Endonucleolytic cleavage to 5'-phosphooligonucleotide end-products.. In terms of biological role, endonuclease IV plays a role in DNA repair. It cleaves phosphodiester bonds at apurinic or apyrimidinic (AP) sites, generating a 3'-hydroxyl group and a 5'-terminal sugar phosphate. In Prosthecochloris aestuarii (strain DSM 271 / SK 413), this protein is Probable endonuclease 4.